We begin with the raw amino-acid sequence, 819 residues long: Kinesin-like protein KIN-13A (819 aa).

The segment at 150–178 is disordered; sequence EPFEPSPFIPKEMDEDDDDMLPGSQPGPS. One can recognise a Kinesin motor domain in the interval 199–535; it reads KIKVVVRKRP…LRYADRVKSL (337 aa). An ATP-binding site is contributed by 289 to 296; that stretch reads GQTGSGKT. A disordered region spans residues 534-729; the sequence is SLSKGSNTRK…QSEKESSCDD (196 aa). Low complexity predominate over residues 550–562; the sequence is TIPSSKDSSSAPS. Basic and acidic residues-rich tracts occupy residues 577–589 and 614–631; these read QEKR…RKAA and RGKE…ERVD. The segment covering 632–652 has biased composition (polar residues); the sequence is LNSSRISYNSKPQSVQSSANL. Residues 669 to 686 are compositionally biased toward basic and acidic residues; sequence YRDDKPERQSNYAKKDSG. Positions 697-719 are enriched in low complexity; it reads QQAKQLQQQQRPTSASASQNSSR. Residues 736–767 are a coiled coil; sequence LEEEEALIAAHRKEIENTMEIVREEMNLLAEV.

Belongs to the TRAFAC class myosin-kinesin ATPase superfamily. Kinesin family. KIN-13 subfamily. As to expression, ubiquitous.

The protein resides in the microsome. The chain is Kinesin-like protein KIN-13A from Oryza sativa subsp. japonica (Rice).